The sequence spans 206 residues: Transmembrane emp24 domain-containing protein bai (206 aa).

Residues 1–20 (MLKVLYVIFTIFGYIWPIYS) form the signal peptide. The Lumenal segment spans residues 21–172 (VMFHLTPNTQ…RDTNEKTNSR (152 aa)). The region spanning 30–140 (QKCLKEDIQA…LKPLEVDLKR (111 aa)) is the GOLD domain. The chain crosses the membrane as a helical span at residues 173-193 (VLFFSIFSMCCLLGLATWQVL). The Cytoplasmic portion of the chain corresponds to 194 to 206 (YLRRYFKAKKLIE).

It belongs to the EMP24/GP25L family.

The protein localises to the membrane. Its function is as follows. Eca and bai are essential, though not redundant, for dorsoventral patterning of the embryo. Specifically required during early embryogenesis for the activity of maternal tkv, while the zygotic tkv is not affected. This is Transmembrane emp24 domain-containing protein bai from Drosophila virilis (Fruit fly).